Reading from the N-terminus, the 413-residue chain is Argininosuccinate synthase (413 aa).

22 to 30 provides a ligand contact to ATP; sequence AYSGGLDTS. L-citrulline is bound by residues Y100 and S105. G130 serves as a coordination point for ATP. Residues T132, N136, and D137 each contribute to the L-aspartate site. L-citrulline is bound at residue N136. L-citrulline contacts are provided by R140, S189, S198, E274, and Y286.

This sequence belongs to the argininosuccinate synthase family. Type 1 subfamily. Homotetramer.

The protein resides in the cytoplasm. The enzyme catalyses L-citrulline + L-aspartate + ATP = 2-(N(omega)-L-arginino)succinate + AMP + diphosphate + H(+). The protein operates within amino-acid biosynthesis; L-arginine biosynthesis; L-arginine from L-ornithine and carbamoyl phosphate: step 2/3. In Endomicrobium trichonymphae, this protein is Argininosuccinate synthase.